Reading from the N-terminus, the 41-residue chain is Large ribosomal subunit protein bL36 (41 aa).

Belongs to the bacterial ribosomal protein bL36 family.

This is Large ribosomal subunit protein bL36 from Xanthomonas axonopodis pv. citri (strain 306).